The chain runs to 947 residues: Protocadherin alpha-4 (947 aa).

An N-terminal signal peptide occupies residues 1 to 29 (MEFSWGSGQESQRLLLSFLLLAIWEAGNS). Cadherin domains lie at 30–133 (QIHY…PPRF), 134–242 (PTTQ…APVF), 243–350 (DRSL…VPEL), 351–455 (EFKS…APVF), 456–565 (AQPE…APTL), and 573–681 (SGGI…APSR). Residues 30–697 (QIHYSIPEEA…HSEASLVDVN (668 aa)) are Extracellular-facing. C96 and C102 are disulfide-bonded. N-linked (GlcNAc...) asparagine glycosylation is found at N257 and N265. An O-linked (Man) threonine glycan is attached at T438. Residues S440 and S442 are each glycosylated (O-linked (Man) serine). Residue N548 is glycosylated (N-linked (GlcNAc...) asparagine). A helical membrane pass occupies residues 698–718 (VYLIIAICAVSSLLVLTLLLY). The Cytoplasmic segment spans residues 719–947 (TALRCSTVPS…GNSTTDNSDQ (229 aa)). PXXP repeat units follow at residues 734-737 (PPKP), 774-777 (PSLS), 796-799 (PRQP), 829-832 (PGGP), 870-873 (PGNP), and 888-891 (PGSP). Positions 734–891 (PPKPVMVCSS…PDKFIIPGSP (158 aa)) are 6 X 4 AA repeats of P-X-X-P. The segment at 738–947 (VMVCSSAVGS…GNSTTDNSDQ (210 aa)) is required for interaction with FYN. 2 disordered regions span residues 761-805 (GEYP…DWRY) and 824-853 (ILRA…EVSP). Residues 891-947 (PAIISIRQEPANNQIDKSDFITFGKKEETKKKKKKKKGNKTQEKKEKGNSTTDNSDQ) form a disordered region. The segment covering 906–920 (DKSDFITFGKKEETK) has biased composition (basic and acidic residues).

In terms of assembly, forms homodimers in trans (molecules expressed by two different cells). Forms promiscuous heterodimers in cis (at the plasma membrane of the same cell) with other protocadherins. Interacts with FYN. Detected in brain throughout embryonic development. Detected in adult brain, in particular in cerebellum and forebrain.

The protein resides in the cell membrane. Calcium-dependent cell-adhesion protein involved in cells self-recognition and non-self discrimination. Thereby, it is involved in the establishment and maintenance of specific neuronal connections in the brain. The sequence is that of Protocadherin alpha-4 from Mus musculus (Mouse).